The chain runs to 452 residues: Putative purine permease CPE0397 (452 aa).

12 helical membrane passes run 34–54, 58–78, 83–103, 108–128, 138–158, 172–192, 201–221, 250–270, 326–346, 348–368, 383–403, and 412–432; these read IFAAFGGIIVVPLVIATSLGF, VTTALISASILGSGLATIIQA, KVGARVACIMGTDFTFVSPAI, VLGLPGIIGATILGSLFEVIL, FFPPLVTGTVVALIGLTLLPV, YASLENLAVAMFVLVITLLLN, SASILIGIVVGYIVCIPLGLV, MAFIPAYFVATIGTVGCLKAI, AVMAGILLVILGFLPKVAAII, GIPNPVLGGVGIMMFGTVAAA, LLIIAISMGLGLGVTFRPDVI, and MIFSSGISTGTIAALILNAVL.

Belongs to the nucleobase:cation symporter-2 (NCS2) (TC 2.A.40) family.

Its subcellular location is the cell membrane. The polypeptide is Putative purine permease CPE0397 (cpx) (Clostridium perfringens (strain 13 / Type A)).